An 893-amino-acid polypeptide reads, in one-letter code: Alanine--tRNA ligase (893 aa).

It belongs to the class-II aminoacyl-tRNA synthetase family.

It is found in the cytoplasm. It carries out the reaction tRNA(Ala) + L-alanine + ATP = L-alanyl-tRNA(Ala) + AMP + diphosphate. Its function is as follows. Catalyzes the attachment of alanine to tRNA(Ala) in a two-step reaction: alanine is first activated by ATP to form Ala-AMP and then transferred to the acceptor end of tRNA(Ala). Also edits incorrectly charged Ser-tRNA(Ala) and Gly-tRNA(Ala) via its editing domain. The sequence is that of Alanine--tRNA ligase (alaS) from Leuconostoc mesenteroides subsp. mesenteroides (strain ATCC 8293 / DSM 20343 / BCRC 11652 / CCM 1803 / JCM 6124 / NCDO 523 / NBRC 100496 / NCIMB 8023 / NCTC 12954 / NRRL B-1118 / 37Y).